The primary structure comprises 585 residues: Pyruvate kinase (585 aa).

Arginine 32 is a binding site for substrate. K(+) contacts are provided by asparagine 34, serine 36, aspartate 66, and threonine 67. 34–37 contacts ATP; sequence NFSH. 2 residues coordinate ATP: arginine 73 and lysine 156. Glutamate 221 contributes to the Mg(2+) binding site. Substrate-binding residues include glycine 244, aspartate 245, and threonine 277. Residue aspartate 245 participates in Mg(2+) binding.

This sequence belongs to the pyruvate kinase family. In the C-terminal section; belongs to the PEP-utilizing enzyme family. Mg(2+) serves as cofactor. Requires K(+) as cofactor.

It catalyses the reaction pyruvate + ATP = phosphoenolpyruvate + ADP + H(+). It participates in carbohydrate degradation; glycolysis; pyruvate from D-glyceraldehyde 3-phosphate: step 5/5. This is Pyruvate kinase (pyk) from Staphylococcus aureus (strain bovine RF122 / ET3-1).